Reading from the N-terminus, the 348-residue chain is Phosphoribosylformylglycinamidine cyclo-ligase (348 aa).

It belongs to the AIR synthase family.

The protein resides in the cytoplasm. The catalysed reaction is 2-formamido-N(1)-(5-O-phospho-beta-D-ribosyl)acetamidine + ATP = 5-amino-1-(5-phospho-beta-D-ribosyl)imidazole + ADP + phosphate + H(+). The protein operates within purine metabolism; IMP biosynthesis via de novo pathway; 5-amino-1-(5-phospho-D-ribosyl)imidazole from N(2)-formyl-N(1)-(5-phospho-D-ribosyl)glycinamide: step 2/2. This Geotalea daltonii (strain DSM 22248 / JCM 15807 / FRC-32) (Geobacter daltonii) protein is Phosphoribosylformylglycinamidine cyclo-ligase.